The sequence spans 763 residues: Phosphoglycerol transferase I (763 aa).

The next 4 membrane-spanning stretches (helical) occupy residues 1–21 (MSEL…AWKA), 26–46 (WWFA…ITLF), 77–97 (ILPG…LGWI), and 108–128 (FGYS…SPAF).

Belongs to the OpgB family.

It localises to the cell inner membrane. It carries out the reaction a phosphatidylglycerol + a membrane-derived-oligosaccharide D-glucose = a 1,2-diacyl-sn-glycerol + a membrane-derived-oligosaccharide 6-(glycerophospho)-D-glucose.. It participates in glycan metabolism; osmoregulated periplasmic glucan (OPG) biosynthesis. Its function is as follows. Transfers a phosphoglycerol residue from phosphatidylglycerol to the membrane-bound nascent glucan backbones. In Escherichia coli (strain ATCC 8739 / DSM 1576 / NBRC 3972 / NCIMB 8545 / WDCM 00012 / Crooks), this protein is Phosphoglycerol transferase I.